The chain runs to 37 residues: Large ribosomal subunit protein bL36c (37 aa).

It belongs to the bacterial ribosomal protein bL36 family.

It is found in the plastid. It localises to the chloroplast. This is Large ribosomal subunit protein bL36c from Acorus calamus (Sweet flag).